The following is a 625-amino-acid chain: tRNA uridine 5-carboxymethylaminomethyl modification enzyme MnmG (625 aa).

G11–G16 contacts FAD. G271–F285 lines the NAD(+) pocket.

It belongs to the MnmG family. In terms of assembly, homodimer. Heterotetramer of two MnmE and two MnmG subunits. The cofactor is FAD.

Its subcellular location is the cytoplasm. Its function is as follows. NAD-binding protein involved in the addition of a carboxymethylaminomethyl (cmnm) group at the wobble position (U34) of certain tRNAs, forming tRNA-cmnm(5)s(2)U34. The sequence is that of tRNA uridine 5-carboxymethylaminomethyl modification enzyme MnmG from Porphyromonas gingivalis (strain ATCC BAA-308 / W83).